A 153-amino-acid chain; its full sequence is Large ribosomal subunit protein uL15 (153 aa).

The tract at residues 1–49 (MQLHNLYPFPEERKTRRRVGRGSGSGLGCTAGKGHKGQNARAGGGVAPG) is disordered. Residues 21-31 (RGSGSGLGCTA) are compositionally biased toward gly residues.

This sequence belongs to the universal ribosomal protein uL15 family. As to quaternary structure, part of the 50S ribosomal subunit.

Its function is as follows. Binds to the 23S rRNA. The protein is Large ribosomal subunit protein uL15 of Desulfovibrio desulfuricans (strain ATCC 27774 / DSM 6949 / MB).